A 164-amino-acid chain; its full sequence is S-ribosylhomocysteine lyase (164 aa).

Fe cation-binding residues include His54, His58, and Cys128.

It belongs to the LuxS family. As to quaternary structure, homodimer. It depends on Fe cation as a cofactor.

It catalyses the reaction S-(5-deoxy-D-ribos-5-yl)-L-homocysteine = (S)-4,5-dihydroxypentane-2,3-dione + L-homocysteine. Functionally, involved in the synthesis of autoinducer 2 (AI-2) which is secreted by bacteria and is used to communicate both the cell density and the metabolic potential of the environment. The regulation of gene expression in response to changes in cell density is called quorum sensing. Catalyzes the transformation of S-ribosylhomocysteine (RHC) to homocysteine (HC) and 4,5-dihydroxy-2,3-pentadione (DPD). The sequence is that of S-ribosylhomocysteine lyase from Campylobacter hominis (strain ATCC BAA-381 / DSM 21671 / CCUG 45161 / LMG 19568 / NCTC 13146 / CH001A).